A 74-amino-acid polypeptide reads, in one-letter code: Protein SlyX homolog (74 aa).

The protein belongs to the SlyX family.

The chain is Protein SlyX homolog from Neisseria meningitidis serogroup A / serotype 4A (strain DSM 15465 / Z2491).